The primary structure comprises 348 residues: MNMTQARVLVAAVVGLVAVLLYASIHKIEEGHLAVYYRGGALLTSPSGPGYHIMLPFITTFRSVQTTLQTDEVKNVPCGTSGGVMIYIDRIEVVNMLAPYAVFDIVRNYTADYDKTLIFNKIHHELNQFCSAHTLQEVYIELFDQIDENLKQALQKDLNLMAPGLTIQAVRVTKPKIPEAIRRNFELMEAEKTKLLIAAQKQKVVEKEAETERKKAVIEAEKIAQVAKIRFQQKVMEKETEKRISEIEDAAFLAREKAKADAEYYAAHKYATSNKHKLTPEYLELKKYQAIASNSKIYFGSNIPNMFVDSSCALKYSDIRTGRESSLPSKEALEPSGENVIQNKESTG.

Topologically, residues 1–7 are cytoplasmic; it reads MNMTQAR. A helical transmembrane segment spans residues 8-28; that stretch reads VLVAAVVGLVAVLLYASIHKI. Over 29 to 348 the chain is Lumenal; the sequence is EEGHLAVYYR…NVIQNKESTG (320 aa). N-linked (GlcNAc...) asparagine glycosylation occurs at Asn108. An N6-acetyllysine modification is found at Lys269. Residues 325 to 348 form a disordered region; sequence SSLPSKEALEPSGENVIQNKESTG. A compositionally biased stretch (polar residues) spans 339 to 348; sequence NVIQNKESTG.

The protein belongs to the band 7/mec-2 family. Forms a heteromeric complex with ERLIN2. In complex with ERLIN2, interacts with RNF170. Interacts with AMFR and SYVN1. In terms of processing, deubiquitinated by USP25; leading to stabilization. As to expression, expressed in heart, placenta, liver, kidney, pancreas, prostate, testis, ovary and small intestine.

The protein localises to the endoplasmic reticulum membrane. Functionally, component of the ERLIN1/ERLIN2 complex which mediates the endoplasmic reticulum-associated degradation (ERAD) of inositol 1,4,5-trisphosphate receptors (IP3Rs). Involved in regulation of cellular cholesterol homeostasis by regulation the SREBP signaling pathway. Binds cholesterol and may promote ER retention of the SCAP-SREBF complex. Its function is as follows. (Microbial infection) Required early in hepatitis C virus (HCV) infection to initiate RNA replication, and later in the infection to support infectious virus production. This chain is Erlin-1, found in Homo sapiens (Human).